Consider the following 775-residue polypeptide: ATP-dependent 6-phosphofructokinase 2 (775 aa).

Residues 1–390 (MTNTILDTYS…YHSAYRHLNT (390 aa)) are N-terminal catalytic PFK domain 1. Residues Gly25, 88-89 (RC), and 118-121 (GDGS) contribute to the ATP site. Mg(2+) is bound at residue Asp119. Substrate is bound by residues 164-166 (SID), Arg201, 208-210 (MGR), Glu264, Arg292, and 298-301 (HIQR). Residue Asp166 is the Proton acceptor of the active site. An interdomain linker region spans residues 391-404 (SDHPKMVLPEDKRM). Residues 405 to 775 (RVAIIHVGAP…GRSSLYAIPN (371 aa)) form a C-terminal regulatory PFK domain 2 region. Beta-D-fructose 2,6-bisphosphate-binding positions include 537 to 541 (SMSNN), 582 to 584 (QGA), Asp640, and 672 to 675 (HFQQ).

This sequence belongs to the phosphofructokinase type A (PFKA) family. ATP-dependent PFK group I subfamily. Eukaryotic two domain clade 'E' sub-subfamily. Homotetramer. Mg(2+) serves as cofactor.

It localises to the cytoplasm. It catalyses the reaction beta-D-fructose 6-phosphate + ATP = beta-D-fructose 1,6-bisphosphate + ADP + H(+). It participates in carbohydrate degradation; glycolysis; D-glyceraldehyde 3-phosphate and glycerone phosphate from D-glucose: step 3/4. With respect to regulation, allosterically activated by ADP, AMP, or fructose 2,6-bisphosphate, and allosterically inhibited by ATP or citrate. In terms of biological role, catalyzes the phosphorylation of D-fructose 6-phosphate to fructose 1,6-bisphosphate by ATP, the first committing step of glycolysis. The chain is ATP-dependent 6-phosphofructokinase 2 (pfkB) from Aspergillus oryzae (strain ATCC 42149 / RIB 40) (Yellow koji mold).